We begin with the raw amino-acid sequence, 331 residues long: MVSYKEAGVNIEEGYKSVDLIKKHASKTFTKGVLNNLGSFAGMFELPKYKNPVLVSGTDGVGTKLDIAFRMKKYNTVGIDCVAMCVNDILCHGAKPLFFLDYIACGKLESEIAAQLVEGVSNGCIQSECALIGGETAEMPGFYRDGEYDIAGFAVGIAEKDEIIDGSKIEDGDILIGIASSGPHSNGYSLIRKLVEDLHKDFEGNKIGNTLLTPTKIYVKPVMKLLEKYNIKGMAHVTGGGFYENIPRMFKEDFTAVINKKSYPLPNIFSHLMSLGIEEDHMYNTFNMGIGFVLCVNEKDGENIIKDLIEMGEKGYKIGYVKKGDKSVELI.

The protein belongs to the AIR synthase family.

It is found in the cytoplasm. The catalysed reaction is 2-formamido-N(1)-(5-O-phospho-beta-D-ribosyl)acetamidine + ATP = 5-amino-1-(5-phospho-beta-D-ribosyl)imidazole + ADP + phosphate + H(+). Its pathway is purine metabolism; IMP biosynthesis via de novo pathway; 5-amino-1-(5-phospho-D-ribosyl)imidazole from N(2)-formyl-N(1)-(5-phospho-D-ribosyl)glycinamide: step 2/2. The sequence is that of Phosphoribosylformylglycinamidine cyclo-ligase from Clostridium botulinum (strain Okra / Type B1).